A 333-amino-acid chain; its full sequence is tRNA (guanine(37)-N(1))/4-demethylwyosine(37)-methyltransferase Taw22 (333 aa).

S-adenosyl-L-methionine is bound by residues Arg174, Phe191, 213–214, and 243–244; these read EI and DV.

It belongs to the class I-like SAM-binding methyltransferase superfamily. TRM5/TYW2 family.

Its subcellular location is the cytoplasm. The enzyme catalyses guanosine(37) in tRNA + S-adenosyl-L-methionine = N(1)-methylguanosine(37) in tRNA + S-adenosyl-L-homocysteine + H(+). The catalysed reaction is 4-demethylwyosine(37) in tRNA(Phe) + S-adenosyl-L-methionine = isowyosine(37) in tRNA(Phe) + S-adenosyl-L-homocysteine + H(+). Its function is as follows. Catalyzes both the N1-methylation of guanosine and the C7-methylation of 4-demethylwyosine (imG-14) at position 37 in tRNA(Phe). The polypeptide is tRNA (guanine(37)-N(1))/4-demethylwyosine(37)-methyltransferase Taw22 (Pyrococcus abyssi (strain GE5 / Orsay)).